A 322-amino-acid chain; its full sequence is tRNA dimethylallyltransferase (322 aa).

19–26 (GPTASGKT) is a binding site for ATP. 21–26 (TASGKT) contacts substrate. Interaction with substrate tRNA stretches follow at residues 44-47 (DSAL), 168-172 (QRIQR), and 255-260 (RCVGYR).

The protein belongs to the IPP transferase family. Monomer. Mg(2+) serves as cofactor.

It carries out the reaction adenosine(37) in tRNA + dimethylallyl diphosphate = N(6)-dimethylallyladenosine(37) in tRNA + diphosphate. Functionally, catalyzes the transfer of a dimethylallyl group onto the adenine at position 37 in tRNAs that read codons beginning with uridine, leading to the formation of N6-(dimethylallyl)adenosine (i(6)A). This Cupriavidus necator (strain ATCC 17699 / DSM 428 / KCTC 22496 / NCIMB 10442 / H16 / Stanier 337) (Ralstonia eutropha) protein is tRNA dimethylallyltransferase.